The sequence spans 166 residues: Myosin regulatory light chain 2, ventricular/cardiac muscle isoform (166 aa).

A2 carries the n,N,N-trimethylalanine modification. The residue at position 14 (N14) is a Deamidated asparagine. S15 is subject to Phosphoserine; by ZIPK/DAPK3. At S19 the chain carries Phosphoserine. 3 EF-hand domains span residues 24–59 (TQIQEFKEAFTIMDQNRDGFIDKNDLRDTFAALGRV), 94–129 (DPEETILNAFKVFDPEGKGVLKADYVREMLTTQAER), and 130–165 (FSKEEVDQMFAAFPPDVTGNLDYKNLVHIITHGEEK). The Ca(2+) site is built by D37, N39, D41, and D48. Phosphothreonine is present on T52.

In terms of assembly, myosin is a hexamer of 2 heavy chains and 4 light chains. Interacts with MYOC. In terms of processing, N-terminus is methylated by METTL11A/NTM1. Phosphorylated by MYLK3 and MYLK2; promotes cardiac muscle contraction and function. Dephosphorylated by PPP1CB complexed to PPP1R12B. The phosphorylated form in adult is expressed as gradients across the heart from endocardium (low phosphorylation) to epicardium (high phosphorylation); regulates cardiac torsion and workload distribution. As to expression, highly expressed in type I muscle fibers.

It is found in the cytoplasm. The protein localises to the myofibril. Its subcellular location is the sarcomere. It localises to the a band. Its function is as follows. Contractile protein that plays a role in heart development and function. Following phosphorylation, plays a role in cross-bridge cycling kinetics and cardiac muscle contraction by increasing myosin lever arm stiffness and promoting myosin head diffusion; as a consequence of the increase in maximum contraction force and calcium sensitivity of contraction force. These events altogether slow down myosin kinetics and prolong duty cycle resulting in accumulated myosins being cooperatively recruited to actin binding sites to sustain thin filament activation as a means to fine-tune myofilament calcium sensitivity to force. During cardiogenesis plays an early role in cardiac contractility by promoting cardiac myofibril assembly. The protein is Myosin regulatory light chain 2, ventricular/cardiac muscle isoform of Homo sapiens (Human).